The sequence spans 520 residues: Eukaryotic translation initiation factor 3 subunit L (520 aa).

A PCI domain is found at 278–478 (FATYYYVGIC…ELDIALENDL (201 aa)).

Belongs to the eIF-3 subunit L family. In terms of assembly, component of the eukaryotic translation initiation factor 3 (eIF-3) complex.

It is found in the cytoplasm. Component of the eukaryotic translation initiation factor 3 (eIF-3) complex, which is involved in protein synthesis of a specialized repertoire of mRNAs and, together with other initiation factors, stimulates binding of mRNA and methionyl-tRNAi to the 40S ribosome. The eIF-3 complex specifically targets and initiates translation of a subset of mRNAs involved in cell proliferation. This chain is Eukaryotic translation initiation factor 3 subunit L, found in Yarrowia lipolytica (strain CLIB 122 / E 150) (Yeast).